The primary structure comprises 431 residues: Glutamyl-tRNA reductase (431 aa).

Substrate contacts are provided by residues 49-52, serine 109, 114-116, and glutamine 120; these read TCNR and EGQ. The active-site Nucleophile is the cysteine 50. Residue 189–194 coordinates NADP(+); it reads GAGKMS.

Belongs to the glutamyl-tRNA reductase family. Homodimer.

It carries out the reaction (S)-4-amino-5-oxopentanoate + tRNA(Glu) + NADP(+) = L-glutamyl-tRNA(Glu) + NADPH + H(+). The protein operates within porphyrin-containing compound metabolism; protoporphyrin-IX biosynthesis; 5-aminolevulinate from L-glutamyl-tRNA(Glu): step 1/2. It participates in porphyrin-containing compound metabolism; chlorophyll biosynthesis. In terms of biological role, catalyzes the NADPH-dependent reduction of glutamyl-tRNA(Glu) to glutamate 1-semialdehyde (GSA). This Trichodesmium erythraeum (strain IMS101) protein is Glutamyl-tRNA reductase.